A 430-amino-acid polypeptide reads, in one-letter code: Adenylosuccinate synthetase (430 aa).

GTP contacts are provided by residues 13 to 19 (GDEGKGK) and 41 to 43 (GHT). Asp14 serves as the catalytic Proton acceptor. Residues Asp14 and Gly41 each contribute to the Mg(2+) site. IMP contacts are provided by residues 14–17 (DEGK), 39–42 (NAGH), Thr130, Arg144, Gln225, Thr240, and Arg304. The Proton donor role is filled by His42. 300–306 (ATTGRAR) provides a ligand contact to substrate. GTP contacts are provided by residues Arg306, 332–334 (KLD), and 414–416 (STG).

The protein belongs to the adenylosuccinate synthetase family. Homodimer. Mg(2+) is required as a cofactor.

Its subcellular location is the cytoplasm. The enzyme catalyses IMP + L-aspartate + GTP = N(6)-(1,2-dicarboxyethyl)-AMP + GDP + phosphate + 2 H(+). It participates in purine metabolism; AMP biosynthesis via de novo pathway; AMP from IMP: step 1/2. Its function is as follows. Plays an important role in the de novo pathway of purine nucleotide biosynthesis. Catalyzes the first committed step in the biosynthesis of AMP from IMP. The protein is Adenylosuccinate synthetase of Pseudomonas syringae pv. tomato (strain ATCC BAA-871 / DC3000).